We begin with the raw amino-acid sequence, 321 residues long: Probable GDP-L-fucose synthase (321 aa).

8–14 provides a ligand contact to NADP(+); it reads GGTGLVG. Catalysis depends on Y136, which acts as the Proton donor/acceptor. Residues K140, 163-166, and H179 each bind NADP(+); that span reads PCNI. Substrate-binding residues include R187, R215, and D277.

It belongs to the NAD(P)-dependent epimerase/dehydratase family. Fucose synthase subfamily. Homodimer.

It carries out the reaction GDP-beta-L-fucose + NADP(+) = GDP-4-dehydro-alpha-D-rhamnose + NADPH + H(+). The protein operates within nucleotide-sugar biosynthesis; GDP-L-fucose biosynthesis via de novo pathway; GDP-L-fucose from GDP-alpha-D-mannose: step 2/2. In terms of biological role, catalyzes the two-step NADP-dependent conversion of GDP-4-dehydro-6-deoxy-D-mannose to GDP-fucose, involving an epimerase and a reductase reaction. This Drosophila melanogaster (Fruit fly) protein is Probable GDP-L-fucose synthase (Gmer).